A 129-amino-acid chain; its full sequence is Small ribosomal subunit protein uS12 (129 aa).

The disordered stretch occupies residues 110–129; sequence RKQGRSRYGAHRKQVAATKK.

This sequence belongs to the universal ribosomal protein uS12 family. In terms of assembly, part of the 30S ribosomal subunit. Contacts proteins S8 and S17. May interact with IF1 in the 30S initiation complex.

With S4 and S5 plays an important role in translational accuracy. Functionally, interacts with and stabilizes bases of the 16S rRNA that are involved in tRNA selection in the A site and with the mRNA backbone. Located at the interface of the 30S and 50S subunits, it traverses the body of the 30S subunit contacting proteins on the other side and probably holding the rRNA structure together. The combined cluster of proteins S8, S12 and S17 appears to hold together the shoulder and platform of the 30S subunit. This is Small ribosomal subunit protein uS12 from Rickettsia prowazekii (strain Madrid E).